We begin with the raw amino-acid sequence, 162 residues long: NADH-quinone oxidoreductase subunit I (162 aa).

4Fe-4S ferredoxin-type domains follow at residues 54 to 83 (RRYE…IESE) and 93 to 122 (TRYD…ETQI). Residues Cys-63, Cys-66, Cys-69, Cys-73, Cys-102, Cys-105, Cys-108, and Cys-112 each coordinate [4Fe-4S] cluster.

The protein belongs to the complex I 23 kDa subunit family. NDH-1 is composed of 14 different subunits. Subunits NuoA, H, J, K, L, M, N constitute the membrane sector of the complex. It depends on [4Fe-4S] cluster as a cofactor.

It is found in the cell inner membrane. The enzyme catalyses a quinone + NADH + 5 H(+)(in) = a quinol + NAD(+) + 4 H(+)(out). In terms of biological role, NDH-1 shuttles electrons from NADH, via FMN and iron-sulfur (Fe-S) centers, to quinones in the respiratory chain. The immediate electron acceptor for the enzyme in this species is believed to be ubiquinone. Couples the redox reaction to proton translocation (for every two electrons transferred, four hydrogen ions are translocated across the cytoplasmic membrane), and thus conserves the redox energy in a proton gradient. The chain is NADH-quinone oxidoreductase subunit I from Burkholderia thailandensis (strain ATCC 700388 / DSM 13276 / CCUG 48851 / CIP 106301 / E264).